A 123-amino-acid polypeptide reads, in one-letter code: Large ribosomal subunit protein uL18 (123 aa).

It belongs to the universal ribosomal protein uL18 family. Part of the 50S ribosomal subunit; part of the 5S rRNA/L5/L18/L25 subcomplex. Contacts the 5S and 23S rRNAs.

Its function is as follows. This is one of the proteins that bind and probably mediate the attachment of the 5S RNA into the large ribosomal subunit, where it forms part of the central protuberance. The sequence is that of Large ribosomal subunit protein uL18 from Chlamydia trachomatis serovar L2 (strain ATCC VR-902B / DSM 19102 / 434/Bu).